A 403-amino-acid chain; its full sequence is Acetylornithine aminotransferase (403 aa).

Pyridoxal 5'-phosphate contacts are provided by residues 107–108 (GA) and Phe-140. Arg-143 serves as a coordination point for N(2)-acetyl-L-ornithine. Residue 225–228 (DEVQ) coordinates pyridoxal 5'-phosphate. Lys-254 carries the post-translational modification N6-(pyridoxal phosphate)lysine. Residue Ser-282 participates in N(2)-acetyl-L-ornithine binding. Thr-283 is a pyridoxal 5'-phosphate binding site.

The protein belongs to the class-III pyridoxal-phosphate-dependent aminotransferase family. ArgD subfamily. In terms of assembly, homodimer. Pyridoxal 5'-phosphate is required as a cofactor.

The protein localises to the cytoplasm. It catalyses the reaction N(2)-acetyl-L-ornithine + 2-oxoglutarate = N-acetyl-L-glutamate 5-semialdehyde + L-glutamate. It participates in amino-acid biosynthesis; L-arginine biosynthesis; N(2)-acetyl-L-ornithine from L-glutamate: step 4/4. This Vibrio vulnificus (strain YJ016) protein is Acetylornithine aminotransferase.